Reading from the N-terminus, the 446-residue chain is tRNA modification GTPase MnmE (446 aa).

Residues R24, E81, and K120 each contribute to the (6S)-5-formyl-5,6,7,8-tetrahydrofolate site. One can recognise a TrmE-type G domain in the interval 216-368; sequence GLHAVLIGPP…LHIRLRALAL (153 aa). N226 serves as a coordination point for K(+). GTP contacts are provided by residues 226-231, 245-251, and 270-273; these read NAGKSS, TDVAGTT, and DTAG. Mg(2+) is bound at residue S230. K(+)-binding residues include T245, V247, and T250. Residue T251 coordinates Mg(2+). Position 446 (K446) interacts with (6S)-5-formyl-5,6,7,8-tetrahydrofolate.

The protein belongs to the TRAFAC class TrmE-Era-EngA-EngB-Septin-like GTPase superfamily. TrmE GTPase family. As to quaternary structure, homodimer. Heterotetramer of two MnmE and two MnmG subunits. K(+) serves as cofactor.

It localises to the cytoplasm. Its function is as follows. Exhibits a very high intrinsic GTPase hydrolysis rate. Involved in the addition of a carboxymethylaminomethyl (cmnm) group at the wobble position (U34) of certain tRNAs, forming tRNA-cmnm(5)s(2)U34. This Xanthomonas euvesicatoria pv. vesicatoria (strain 85-10) (Xanthomonas campestris pv. vesicatoria) protein is tRNA modification GTPase MnmE.